Reading from the N-terminus, the 692-residue chain is Elongation factor G (692 aa).

The region spanning 8–283 (NRIRNIGIAA…AVIDYLPAPT (276 aa)) is the tr-type G domain. Residues 17-24 (AHIDAGKT), 81-85 (DTPGH), and 135-138 (NKMD) each bind GTP.

The protein belongs to the TRAFAC class translation factor GTPase superfamily. Classic translation factor GTPase family. EF-G/EF-2 subfamily.

The protein localises to the cytoplasm. Catalyzes the GTP-dependent ribosomal translocation step during translation elongation. During this step, the ribosome changes from the pre-translocational (PRE) to the post-translocational (POST) state as the newly formed A-site-bound peptidyl-tRNA and P-site-bound deacylated tRNA move to the P and E sites, respectively. Catalyzes the coordinated movement of the two tRNA molecules, the mRNA and conformational changes in the ribosome. This Helicobacter pylori (strain P12) protein is Elongation factor G.